A 484-amino-acid polypeptide reads, in one-letter code: Pheophytinase, chloroplastic (484 aa).

The transit peptide at M1–S47 directs the protein to the chloroplast.

Belongs to the AB hydrolase superfamily. Interacts with HCAR, RCCR, PAO and the LHCII complex. Part of a SGR1-CCE-LHCII complex, which acts in chlorophyll breakdown.

It is found in the plastid. It localises to the chloroplast thylakoid membrane. The protein resides in the chloroplast stroma. Its function is as follows. Alpha/beta hydrolase dephytylating specifically the Mg-free chlorophyll pigment (pheophytin), yielding pheophorbide. No activity on chlorophyll. Belongs to the chlorophyll catabolic enzymes (CCEs). The chain is Pheophytinase, chloroplastic (PPH) from Arabidopsis thaliana (Mouse-ear cress).